We begin with the raw amino-acid sequence, 402 residues long: UDP-glucose 6-dehydrogenase (402 aa).

NAD(+) contacts are provided by residues 2-19 (KIAV…GVLL), V11, D29, K34, T83, T118, and E145. Substrate contacts are provided by residues 141 to 145 (EFLRE), K204, N208, 249 to 253 (YNNPS), and G257. Y259 serves as a coordination point for NAD(+). C260 (nucleophile) is an active-site residue. K263 provides a ligand contact to NAD(+). K320 provides a ligand contact to substrate. R327 is an NAD(+) binding site.

Belongs to the UDP-glucose/GDP-mannose dehydrogenase family.

It carries out the reaction UDP-alpha-D-glucose + 2 NAD(+) + H2O = UDP-alpha-D-glucuronate + 2 NADH + 3 H(+). Its pathway is nucleotide-sugar biosynthesis; UDP-alpha-D-glucuronate biosynthesis; UDP-alpha-D-glucuronate from UDP-alpha-D-glucose: step 1/1. Functionally, catalyzes the formation of UDP-glucuronic acid which is required for capsular hyaluronic acid synthesis. The sequence is that of UDP-glucose 6-dehydrogenase (hasB) from Streptococcus pyogenes serotype M1.